Reading from the N-terminus, the 495-residue chain is Probable cytosol aminopeptidase (495 aa).

Positions 258 and 263 each coordinate Mn(2+). The active site involves Lys270. Mn(2+) is bound by residues Asp281, Asp340, and Glu342. Residue Arg344 is part of the active site.

Belongs to the peptidase M17 family. It depends on Mn(2+) as a cofactor.

Its subcellular location is the cytoplasm. It catalyses the reaction Release of an N-terminal amino acid, Xaa-|-Yaa-, in which Xaa is preferably Leu, but may be other amino acids including Pro although not Arg or Lys, and Yaa may be Pro. Amino acid amides and methyl esters are also readily hydrolyzed, but rates on arylamides are exceedingly low.. It carries out the reaction Release of an N-terminal amino acid, preferentially leucine, but not glutamic or aspartic acids.. Functionally, presumably involved in the processing and regular turnover of intracellular proteins. Catalyzes the removal of unsubstituted N-terminal amino acids from various peptides. The sequence is that of Probable cytosol aminopeptidase from Leptospira interrogans serogroup Icterohaemorrhagiae serovar Lai (strain 56601).